Reading from the N-terminus, the 300-residue chain is Homoserine kinase (300 aa).

86–96 (PVARGLGSSAT) lines the ATP pocket.

It belongs to the GHMP kinase family. Homoserine kinase subfamily.

It localises to the cytoplasm. It catalyses the reaction L-homoserine + ATP = O-phospho-L-homoserine + ADP + H(+). Its pathway is amino-acid biosynthesis; L-threonine biosynthesis; L-threonine from L-aspartate: step 4/5. Its function is as follows. Catalyzes the ATP-dependent phosphorylation of L-homoserine to L-homoserine phosphate. The sequence is that of Homoserine kinase from Persephonella marina (strain DSM 14350 / EX-H1).